Reading from the N-terminus, the 623-residue chain is Leucine aminopeptidase 2 (623 aa).

A peptide is bound by residues 140–142 and 266–271; these read QLE and PYGGME. A Zn(2+)-binding site is contributed by histidine 295. Glutamate 296 acts as the Proton acceptor in catalysis. Zn(2+) is bound by residues histidine 299 and glutamate 318. The active-site Proton donor is tyrosine 382.

Belongs to the peptidase M1 family. It depends on Zn(2+) as a cofactor.

The protein resides in the cytoplasm. The protein localises to the nucleus. The catalysed reaction is an epoxide + H2O = an ethanediol. Functionally, aminopeptidase that preferentially cleaves di- and tripeptides. Also has low epoxide hydrolase activity (in vitro). Can hydrolyze the epoxide leukotriene LTA(4) but it forms preferentially 5,6-dihydroxy-7,9,11,14-eicosatetraenoic acid rather than the cytokine leukotriene B(4) as the product compared to the homologous mammalian enzyme (in vitro). The chain is Leucine aminopeptidase 2 from Eremothecium gossypii (strain ATCC 10895 / CBS 109.51 / FGSC 9923 / NRRL Y-1056) (Yeast).